A 216-amino-acid polypeptide reads, in one-letter code: GTP cyclohydrolase 1 (216 aa).

Zn(2+) is bound by residues cysteine 108, histidine 111, and cysteine 179.

It belongs to the GTP cyclohydrolase I family. In terms of assembly, toroid-shaped homodecamer, composed of two pentamers of five dimers.

The enzyme catalyses GTP + H2O = 7,8-dihydroneopterin 3'-triphosphate + formate + H(+). It functions in the pathway cofactor biosynthesis; 7,8-dihydroneopterin triphosphate biosynthesis; 7,8-dihydroneopterin triphosphate from GTP: step 1/1. In Shewanella sp. (strain ANA-3), this protein is GTP cyclohydrolase 1.